The sequence spans 422 residues: 4-hydroxy-3-methylbut-2-en-1-yl diphosphate synthase (flavodoxin) (422 aa).

The [4Fe-4S] cluster site is built by Cys316, Cys319, Cys362, and Glu369.

This sequence belongs to the IspG family. It depends on [4Fe-4S] cluster as a cofactor.

The catalysed reaction is (2E)-4-hydroxy-3-methylbut-2-enyl diphosphate + oxidized [flavodoxin] + H2O + 2 H(+) = 2-C-methyl-D-erythritol 2,4-cyclic diphosphate + reduced [flavodoxin]. Its pathway is isoprenoid biosynthesis; isopentenyl diphosphate biosynthesis via DXP pathway; isopentenyl diphosphate from 1-deoxy-D-xylulose 5-phosphate: step 5/6. Converts 2C-methyl-D-erythritol 2,4-cyclodiphosphate (ME-2,4cPP) into 1-hydroxy-2-methyl-2-(E)-butenyl 4-diphosphate. The polypeptide is 4-hydroxy-3-methylbut-2-en-1-yl diphosphate synthase (flavodoxin) (Ehrlichia canis (strain Jake)).